The primary structure comprises 247 residues: GTP cyclohydrolase 1 type 2 homolog (247 aa).

A divalent metal cation-binding residues include H63, H64, D101, H215, and E219.

It belongs to the GTP cyclohydrolase I type 2/NIF3 family. Toroid-shaped homohexamer. In the hexamer, 3 dimers assemble to form a ring-like structure surrounding a central hole.

Provides significant protection from radiation damage and may be involved in the degradation of radiation-damaged nucleotides. This is GTP cyclohydrolase 1 type 2 homolog (ybgI) from Salmonella typhi.